The following is a 492-amino-acid chain: Serine incorporator 4 (492 aa).

A run of 10 helical transmembrane segments spans residues 58 to 78 (FYIL…SKTV), 113 to 133 (AVYR…VLLV), 148 to 168 (SFWS…FCIP), 179 to 199 (IGIC…TAFA), 217 to 237 (FLGV…GAVL), 254 to 274 (LLSL…APCI), 281 to 301 (SGLL…FSAL), 330 to 350 (IPDA…VLFA), 421 to 441 (GFHF…TNWF), and 464 to 484 (VASC…PLLA).

Belongs to the TDE1 family.

It is found in the membrane. Its function is as follows. Incorporates a polar amino acid serine into membranes and facilitates the synthesis of two serine-derived lipids, phosphatidylserine and sphingolipids. This is Serine incorporator 4 (Serinc4) from Rattus norvegicus (Rat).